A 642-amino-acid polypeptide reads, in one-letter code: ATP-dependent rRNA helicase spb4 (642 aa).

The Q motif signature appears at 14–42 (WDGVTPALSEWVLDAVASMGFTRMTPVQA). Positions 45 to 250 (IPLFMAHKDV…RVGLRNPVKV (206 aa)) constitute a Helicase ATP-binding domain. ATP is bound at residue 58 to 65 (AVTGSGKT). The short motif at 198–201 (DEAD) is the DEAD box element. Residues 284-438 (AIKHILYSLE…TLTITDADAA (155 aa)) form the Helicase C-terminal domain. Residues 522-625 (AYKDKQREKR…RLLRRAAKDK (104 aa)) adopt a coiled-coil conformation. Composition is skewed to basic and acidic residues over residues 527 to 536 (QREKRRKEQV) and 577 to 628 (AKQA…KESK). The tract at residues 527-642 (QREKRRKEQV…DDDDEFKGFD (116 aa)) is disordered. Over residues 632-642 (GDDDDEFKGFD) the composition is skewed to acidic residues.

Belongs to the DEAD box helicase family. DDX55/SPB4 subfamily. Component of pre-60S ribosomal complexes.

It localises to the nucleus. The protein resides in the nucleolus. The enzyme catalyses ATP + H2O = ADP + phosphate + H(+). ATP-binding RNA helicase involved in the biogenesis of 60S ribosomal subunits. Binds 90S pre-ribosomal particles and dissociates from pre-60S ribosomal particles after processing of 27SB pre-rRNA. Required for the normal formation of 18S rRNA through the processing of pre-rRNAs at sites A0, A1 and A2, and the normal formation of 25S and 5.8S rRNAs through the processing of pre-rRNAs at sites C1 and C2. This Aspergillus niger (strain ATCC MYA-4892 / CBS 513.88 / FGSC A1513) protein is ATP-dependent rRNA helicase spb4.